Here is a 284-residue protein sequence, read N- to C-terminus: uncharacterized protein (284 aa).

The C3H1-type zinc-finger motif lies at 37–65 (NEKKLICFSIINGENCIYGPNCTYAHSLS).

This is an uncharacterized protein from Acanthamoeba polyphaga (Amoeba).